A 293-amino-acid chain; its full sequence is MNKWLITSGVMLSLLSANSYAVMGKRYVATPQQSQWEMVVNTPLECQLVHPIPSFGDAVFSSRASKKINLDFELKMRRPMGETRNVSLISMPPPWRPGEHADRITNLKFFKQFDGYVGGQTAWGILSELEKGRYPTFSYQDWQSRDQRIEVALSSVLFQSKYNAFSDCIANLLKYSFEDIAFTILHYERQGDQLTKASKKRLAQIADYVRHNQDIDLVLVATYTDSTDGKSESQSLSERRAESLRTYFESLGLPEDRIQVQGYGKRRPIADNGTPIGKDKNRRVVISLGRTQV.

The first 21 residues, 1-21 (MNKWLITSGVMLSLLSANSYA), serve as a signal peptide directing secretion. Positions 175–292 (YSFEDIAFTI…RVVISLGRTQ (118 aa)) constitute an OmpA-like domain.

It localises to the cell membrane. In terms of biological role, may play the role of a stator in the sodium flagellar motor, stabilizing the force-generating unit through direct interaction with the cell wall. The polypeptide is Sodium-type flagellar protein MotY (Vibrio parahaemolyticus serotype O3:K6 (strain RIMD 2210633)).